We begin with the raw amino-acid sequence, 184 residues long: MASSSNVNGNLVDELEEAFQSCIHALTKEESATGVDKDEIKLEVDQTTLKFIDLARQMEAFFLQKRFLLSALKPDLLLKEENFDLKQEIARKDELIRKHYEKIESWKNLLSDQQNYNKPIQSLPPDMRGNLTGGVPGGPGMMPGGIGMPMQNSMQVQQMQAQQQQMQMLQAQQMQQQMQSMPIG.

Positions 77–105 (LLKEENFDLKQEIARKDELIRKHYEKIES) form a coiled coil.

It belongs to the Mediator complex subunit 28 family. In terms of assembly, component of the Mediator complex.

It localises to the nucleus. Component of the Mediator complex, a coactivator involved in the regulated transcription of nearly all RNA polymerase II-dependent genes. Mediator functions as a bridge to convey information from gene-specific regulatory proteins to the basal RNA polymerase II transcription machinery. Mediator is recruited to promoters by direct interactions with regulatory proteins and serves as a scaffold for the assembly of a functional preinitiation complex with RNA polymerase II and the general transcription factors. The chain is Mediator of RNA polymerase II transcription subunit 28 (MED28) from Aedes aegypti (Yellowfever mosquito).